A 62-amino-acid chain; its full sequence is Metallothionein-4 (62 aa).

C6, C8, C14, C16, C20, C22, C25, C27, C34, C35, C37, C38, C42, C45, C49, C51, C58, C60, and C61 together coordinate a divalent metal cation.

This sequence belongs to the metallothionein superfamily. Type 1 family.

In terms of biological role, seems to bind zinc and copper. Could play a special role in regulating zinc metabolism during the differentiation of stratified epithelia. In Homo sapiens (Human), this protein is Metallothionein-4 (MT4).